The primary structure comprises 168 residues: Photosystem I assembly protein Ycf3 (168 aa).

3 TPR repeats span residues 35–68 (AFTY…EIDP), 72–105 (SYIL…NPFL), and 120–153 (GEQA…TPGN).

This sequence belongs to the Ycf3 family.

Its subcellular location is the plastid. It localises to the chloroplast thylakoid membrane. Essential for the assembly of the photosystem I (PSI) complex. May act as a chaperone-like factor to guide the assembly of the PSI subunits. In Solanum lycopersicum (Tomato), this protein is Photosystem I assembly protein Ycf3.